The following is a 179-amino-acid chain: GTP-dependent dephospho-CoA kinase (179 aa).

Residues Asp43, Val45, Asp62, Glu120, and Asp143 each coordinate GTP.

It belongs to the GTP-dependent DPCK family.

It catalyses the reaction 3'-dephospho-CoA + GTP = GDP + CoA + H(+). Its pathway is cofactor biosynthesis; coenzyme A biosynthesis. Its function is as follows. Catalyzes the GTP-dependent phosphorylation of the 3'-hydroxyl group of dephosphocoenzyme A to form coenzyme A (CoA). In Haloarcula marismortui (strain ATCC 43049 / DSM 3752 / JCM 8966 / VKM B-1809) (Halobacterium marismortui), this protein is GTP-dependent dephospho-CoA kinase.